Here is a 383-residue protein sequence, read N- to C-terminus: Adaptive-response sensory kinase SasA (383 aa).

One can recognise a Histidine kinase domain in the interval 152 to 365 (MVAHELRTPL…CFTFTVPIWQ (214 aa)). H155 carries the phosphohistidine; by autocatalysis modification.

In terms of assembly, homooligomerizes. Interacts with KaiC. Participates in the KaiABC clock complex, whose core is composed of a KaiC homohexamer, 6 KaiB and up to 6 KaiA dimers. SasA and KaiB(fs) compete to bind to KaiC.

The enzyme catalyses ATP + protein L-histidine = ADP + protein N-phospho-L-histidine.. Member of the two-component regulatory system SasA/RpaA involved in genome-wide circadian gene expression. One of several clock output pathways. Participates in the Kai clock protein complex, the main circadian regulator in cyanobacteria, via its interaction with KaiC. KaiC enhances the autophosphorylation activity of SasA, which then transfers its phosphate group to RpaA to activate it. In addition to its output function, recruits fold-shifted KaiB (KaiB(fs)) to KaiC to cooperatively form the KaiB(6):KaiC(6) complex (independent of SasA kinase activity). Required for robustness of the circadian rhythm of gene expression and is involved in clock output, also required for adaptation to light/dark cycles. The polypeptide is Adaptive-response sensory kinase SasA (Synechococcus sp. (strain CC9902)).